A 740-amino-acid chain; its full sequence is Protein SIEVE ELEMENT OCCLUSION B (740 aa).

Positions 1–23 (MESLIKSQHAQQLAGHKNTTGKT) are enriched in polar residues. The interval 1–27 (MESLIKSQHAQQLAGHKNTTGKTPSME) is disordered.

As to quaternary structure, can form homodimer. In terms of tissue distribution, expressed in phloem sieve elements.

Scaffold protein required to form the phloem filament matrix in sieve elements. The sequence is that of Protein SIEVE ELEMENT OCCLUSION B from Arabidopsis thaliana (Mouse-ear cress).